Reading from the N-terminus, the 481-residue chain is NADH-quinone oxidoreductase subunit N (481 aa).

Transmembrane regions (helical) follow at residues 11 to 31 (ALPE…DLWA), 38 to 58 (WTHY…LAVW), 74 to 94 (GMSR…FVYA), 103 to 123 (IFKG…SVMV), 128 to 148 (FLTA…LIAL), 163 to 183 (FVLG…VYGA), 208 to 228 (LGLV…PFHM), 241 to 261 (VTAL…FRIL), 272 to 292 (WSLM…LAAI), 300 to 322 (MLAY…GAVG), 332 to 352 (TYAL…DGDN), 368 to 388 (VWLA…PPLM), 404 to 424 (GYVW…FYYL), and 450 to 470 (SLLS…QTVI).

The protein belongs to the complex I subunit 2 family. As to quaternary structure, NDH-1 is composed of 14 different subunits. Subunits NuoA, H, J, K, L, M, N constitute the membrane sector of the complex.

It is found in the cell inner membrane. The catalysed reaction is a quinone + NADH + 5 H(+)(in) = a quinol + NAD(+) + 4 H(+)(out). Functionally, NDH-1 shuttles electrons from NADH, via FMN and iron-sulfur (Fe-S) centers, to quinones in the respiratory chain. The immediate electron acceptor for the enzyme in this species is believed to be ubiquinone. Couples the redox reaction to proton translocation (for every two electrons transferred, four hydrogen ions are translocated across the cytoplasmic membrane), and thus conserves the redox energy in a proton gradient. In Neisseria gonorrhoeae (strain ATCC 700825 / FA 1090), this protein is NADH-quinone oxidoreductase subunit N.